The primary structure comprises 312 residues: TATA box-binding protein-like 2 (312 aa).

The segment at 65 to 115 (DELSTQDEPSQVEKESKNEDSGIYTDCPQKESTQADIDTSNSAQNTSQFNL) is disordered. Positions 75–84 (QVEKESKNED) are enriched in basic and acidic residues. The segment covering 94–115 (KESTQADIDTSNSAQNTSQFNL) has biased composition (polar residues).

Belongs to the TBP family. In terms of tissue distribution, in adults, expressed in the gonads, with expression much higher in the ovary than the testis (at protein level). Shows a small amount of expression in other adult organs, including the brain and kidney. Embryonic expression is mostly ubiquitous except in early gastrula embryos where expression is asymmetric.

It localises to the nucleus. Its function is as follows. TATA box-binding transcription factor. Members of the TBP family are differentially required to regulate transcription and development during early embryogenesis. Commits mesoderm to the hematopoietic lineage during hemopoiesis, acting via mespa. Binds to the mespa promoter. The protein is TATA box-binding protein-like 2 of Danio rerio (Zebrafish).